A 160-amino-acid polypeptide reads, in one-letter code: 2-C-methyl-D-erythritol 2,4-cyclodiphosphate synthase (160 aa).

2 residues coordinate a divalent metal cation: D9 and H11. Residues 9–11 (DVH) and 35–36 (HS) contribute to the 4-CDP-2-C-methyl-D-erythritol 2-phosphate site. H43 is an a divalent metal cation binding site. 4-CDP-2-C-methyl-D-erythritol 2-phosphate contacts are provided by residues 57-59 (DIG), 62-66 (FPDND), and F140.

This sequence belongs to the IspF family. Homotrimer. A divalent metal cation serves as cofactor.

It carries out the reaction 4-CDP-2-C-methyl-D-erythritol 2-phosphate = 2-C-methyl-D-erythritol 2,4-cyclic diphosphate + CMP. The protein operates within isoprenoid biosynthesis; isopentenyl diphosphate biosynthesis via DXP pathway; isopentenyl diphosphate from 1-deoxy-D-xylulose 5-phosphate: step 4/6. Its function is as follows. Involved in the biosynthesis of isopentenyl diphosphate (IPP) and dimethylallyl diphosphate (DMAPP), two major building blocks of isoprenoid compounds. Catalyzes the conversion of 4-diphosphocytidyl-2-C-methyl-D-erythritol 2-phosphate (CDP-ME2P) to 2-C-methyl-D-erythritol 2,4-cyclodiphosphate (ME-CPP) with a corresponding release of cytidine 5-monophosphate (CMP). The chain is 2-C-methyl-D-erythritol 2,4-cyclodiphosphate synthase from Fusobacterium nucleatum subsp. nucleatum (strain ATCC 25586 / DSM 15643 / BCRC 10681 / CIP 101130 / JCM 8532 / KCTC 2640 / LMG 13131 / VPI 4355).